We begin with the raw amino-acid sequence, 260 residues long: Mitochondrial import inner membrane translocase subunit Tim29 (260 aa).

Residues 1–31 (MAAAALRRFWSRRRAEAGDAVVAKPGVWARL) constitute a mitochondrion transit peptide. Topologically, residues 32–59 (GSWARALLRDYAEACRDASAEARARPGR) are mitochondrial matrix. A helical membrane pass occupies residues 60 to 77 (AAVYVGLLGGAAACFTLA). Topologically, residues 78 to 260 (PSEGAFEEAL…HSLVQAEAPR (183 aa)) are mitochondrial intermembrane.

Component of the TIM22 complex, which core is composed of TIMM22, associated with TIMM10 (TIMM10A and/or TIMM10B), TIMM9, AGK and TIMM29. Interacts with TIMM10B; the interaction is direct. Interacts with TOMM40; linking the TIM22 complex to the TOM complex. Interacts with TIMM22 (when oxidized); the interaction is direct.

The protein resides in the mitochondrion inner membrane. Functionally, component of the TIM22 complex, a complex that mediates the import and insertion of multi-pass transmembrane proteins into the mitochondrial inner membrane. The TIM22 complex forms a twin-pore translocase that uses the membrane potential as the external driving force. Required for the stability of the TIM22 complex and functions in the assembly of the TIMM22 protein into the TIM22 complex. May facilitate cooperation between TIM22 and TOM complexes by interacting with TOMM40. In Homo sapiens (Human), this protein is Mitochondrial import inner membrane translocase subunit Tim29.